The sequence spans 1396 residues: DNA ligase 6 (1396 aa).

Disordered regions lie at residues 441-464 (KNAC…DTTP) and 562-599 (MNLT…GPGQ). 2 short sequence motifs (nuclear localization signal) span residues 572–579 (GKRGKSSG) and 886–893 (LRKISVQT). Glu1037 lines the ATP pocket. The N6-AMP-lysine intermediate role is filled by Lys1039. 4 residues coordinate ATP: Arg1044, Arg1060, Glu1092, and Phe1136. Glu1092 contributes to the Mg(2+) binding site. Glu1207 serves as a coordination point for Mg(2+). Lys1212, Arg1225, and Lys1231 together coordinate ATP.

It belongs to the ATP-dependent DNA ligase family. Mg(2+) serves as cofactor. In terms of tissue distribution, mostly expressed in buds and flowers, and, to a lower extent, in stems, leaves, siliques and seeds.

It localises to the nucleus. The enzyme catalyses ATP + (deoxyribonucleotide)n-3'-hydroxyl + 5'-phospho-(deoxyribonucleotide)m = (deoxyribonucleotide)n+m + AMP + diphosphate.. Its function is as follows. DNA ligase that seals nicks in double-stranded DNA during DNA replication, DNA recombination and DNA repair. Required to maintain seed viability (e.g. longevity and storability) and during seed germination, probably by repairing DNA damage accumulated during seed development, storage and/or imbibition. Facilitates seed germination in cold conditions (2 degrees Celsius) and under oxidative stress (e.g. menadione, a genotoxic agent). Involved in repair of X-ray-induced damage. Functionally, limits stable root transformation by A.tumefaciens T-DNA. The sequence is that of DNA ligase 6 from Arabidopsis thaliana (Mouse-ear cress).